Consider the following 194-residue polypeptide: dTTP/UTP pyrophosphatase (194 aa).

Catalysis depends on Asp-68, which acts as the Proton acceptor.

This sequence belongs to the Maf family. YhdE subfamily. Requires a divalent metal cation as cofactor.

Its subcellular location is the cytoplasm. It catalyses the reaction dTTP + H2O = dTMP + diphosphate + H(+). The catalysed reaction is UTP + H2O = UMP + diphosphate + H(+). Functionally, nucleoside triphosphate pyrophosphatase that hydrolyzes dTTP and UTP. May have a dual role in cell division arrest and in preventing the incorporation of modified nucleotides into cellular nucleic acids. The polypeptide is dTTP/UTP pyrophosphatase (Clostridioides difficile (strain 630) (Peptoclostridium difficile)).